A 478-amino-acid chain; its full sequence is Lipoprotein lipase (478 aa).

The N-terminal stretch at Met1–Ala28 is a signal peptide. The tract at residues Lys35–Thr56 is interaction with GPIHBP1. Cys57 and Cys70 form a disulfide bridge. A glycan (N-linked (GlcNAc...) asparagine) is linked at Asn73. A 3'-nitrotyrosine modification is found at Tyr124. The active-site Nucleophile is Ser162. Asp186 serves as the catalytic Charge relay system. 3'-nitrotyrosine is present on Tyr194. Ala197, Arg200, Ser202, and Asp205 together coordinate Ca(2+). Cys246 and Cys269 are disulfide-bonded. The interval Cys246–Cys269 is essential for determining substrate specificity. The active-site Charge relay system is His271. Residue Asn287 is glycosylated (N-linked (GlcNAc...) asparagine). Intrachain disulfides connect Cys294/Cys313 and Cys305/Cys308. In terms of domain architecture, PLAT spans Phe344 to Lys467. At Tyr346 the chain carries 3'-nitrotyrosine. Asn389 carries an N-linked (GlcNAc...) asparagine glycan. Residues Trp420–Trp424 form an important for interaction with lipoprotein particles region. The tract at residues Lys433 to Lys437 is important for heparin binding. The tract at residues Ile446 to Asp470 is interaction with GPIHBP1. Cys448 and Cys468 are oxidised to a cystine.

Belongs to the AB hydrolase superfamily. Lipase family. Homodimer. Interacts with GPIHBP1 with 1:1 stoichiometry. Interacts with APOC2; the interaction activates LPL activity in the presence of lipids. Interaction with heparan sulfate proteoglycans is required to protect LPL against loss of activity. Associates with lipoprotein particles in blood plasma. Interacts with LMF1 and SEL1L; interaction with SEL1L is required to prevent aggregation of newly synthesized LPL in the endoplasmic reticulum (ER), and for normal export of LPL from the ER to the extracellular space. Interacts with SORL1; SORL1 acts as a sorting receptor, promoting LPL localization to endosomes and later to lysosomes, leading to degradation of newly synthesized LPL. Post-translationally, tyrosine nitration after lipopolysaccharide (LPS) challenge down-regulates the lipase activity. Detected in milk (at protein level).

The protein localises to the cell membrane. It localises to the secreted. It is found in the extracellular space. The protein resides in the extracellular matrix. It catalyses the reaction a triacylglycerol + H2O = a diacylglycerol + a fatty acid + H(+). It carries out the reaction a 1,2-diacyl-sn-glycero-3-phosphocholine + H2O = a 2-acyl-sn-glycero-3-phosphocholine + a fatty acid + H(+). The catalysed reaction is 1,2,3-tri-(9Z-octadecenoyl)-glycerol + H2O = di-(9Z)-octadecenoylglycerol + (9Z)-octadecenoate + H(+). The enzyme catalyses 1,2-di-(9Z-octadecenoyl)-sn-glycero-3-phosphocholine + H2O = (9Z-octadecenoyl)-sn-glycero-3-phosphocholine + (9Z)-octadecenoate + H(+). It catalyses the reaction 1,2,3-tributanoylglycerol + H2O = dibutanoylglycerol + butanoate + H(+). It carries out the reaction 1,2-dihexadecanoyl-sn-glycero-3-phosphocholine + H2O = hexadecanoyl-sn-glycero-3-phosphocholine + hexadecanoate + H(+). With respect to regulation, the apolipoprotein APOC2 acts as a coactivator of LPL activity. Ca(2+) binding promotes protein stability and formation of the active homodimer. Interaction with GPIHBP1 protects LPL against inactivation by ANGPTL4. In terms of biological role, key enzyme in triglyceride metabolism. Catalyzes the hydrolysis of triglycerides from circulating chylomicrons and very low density lipoproteins (VLDL), and thereby plays an important role in lipid clearance from the blood stream, lipid utilization and storage. Although it has both phospholipase and triglyceride lipase activities it is primarily a triglyceride lipase with low but detectable phospholipase activity. Mediates margination of triglyceride-rich lipoprotein particles in capillaries. Recruited to its site of action on the luminal surface of vascular endothelium by binding to GPIHBP1 and cell surface heparan sulfate proteoglycans. This is Lipoprotein lipase (LPL) from Bos taurus (Bovine).